The following is a 1297-amino-acid chain: Protein ENHANCED DOWNY MILDEW 2 (1297 aa).

The PHD-type 1; degenerate zinc-finger motif lies at Glu-222–Lys-281. Positions 237, 241, 275, 278, 285, 288, 306, 311, 316, 319, 346, and 349 each coordinate Zn(2+). The PHD-type 2; atypical zinc-finger motif lies at Ile-282 to Ser-352. The PHD-type 3; degenerate zinc-finger motif lies at Cys-351–Glu-417. The Nuclear localization signal 1 motif lies at Gln-445–His-452. Disordered stretches follow at residues Cys-471–Ala-547 and Thr-562–Leu-598. Low complexity predominate over residues Ser-475–Lys-487. The Nuclear localization signal 2 signature appears at Thr-492–Ser-499. Basic and acidic residues predominate over residues Lys-526–Ala-547. 2 consecutive short sequence motifs (nuclear localization signal) follow at residues Met-610–Ile-617 and Leu-979–Lys-986. 2 stretches are compositionally biased toward basic and acidic residues: residues Gln-969–Gly-990 and Glu-1096–Arg-1109. Disordered regions lie at residues Gln-969–Ser-1017, His-1085–Arg-1109, and Phe-1260–Asp-1297.

Interacts with WNK8 in nucleus; this interaction is involved in developmental processes regulation but not in RPP7-dependent disease resistance. Interacts with EML1 and EML2 in nucleus. Component of the ASI1-AIPP1-EDM2 (AAE) RNA regulatory complex composed of at least AIPP1/EDM3, ASI1 and EDM2 and may contain CPL2, AIPP2 and AIPP3/BDT1. Binds directly to AIPP1/EDM3. Co-associates with AIPP1/EDM3 to histone H3 lysine 9 dimethylation (H3K9me2)-marked chromatin and transcripts at a critical proximal polyadenylation site of RPP7 to hamper proximal transcript polyadeylation/termination. Post-translationally, phosphorylated by WNK8.

The protein resides in the nucleus. In terms of biological role, cellular antisilencing factor and regulator of genome DNA methylation patterns involved in the regulation of chromatin states. Together with SUVH4, monitors repressive epigenetic marks H3K27me1, H3K9me2, and prevents DNA-methylation at CHG sites, affecting especially the expression of transposons and developmentally important genes. Collaboratively with ASI1 and AIPP1/EDM3, the AAE complex regulates alternative RNA processing (e.g. alternative splicing) and epigenetic silencing (e.g. H3K9me2) of intronic heterochromatin-containing genes as well as genic heterochromatin-containing genes by promoting distal 3' polyadenylation. Epigenetic reader that binds DNA and contributes to transcriptional transposable element (TE) silencing by modulating levels of the repressive post-translational histone modifications (PHM) H3K9me2. In cv. Columbia, required for RPP7-dependent disease resistance against the Hyaloperonospora arabidopsidis isolate Hiks1, by promoting levels of RPP7 via alternative polyadenylation (APA), resulting from cooption of epigenetic information at the TE insertion locus COPIA-R7. Exhibits a global role in NLR (nucleotide-binding, leucine-rich repeat) defense genes epigenetic (e.g. H3K9me2 hallmarks) expression control; promotes the accumulation of RPP7, RPP4 and some other proteins, but mediates the repression of several other NLR products, probably to compensate for fitness penalties caused by defense mechanisms. Regulates development processes such as the formation of leaf pavement cells, leaf expansion, fertility and flowering. Prevents FLC accumulation to control flowering. Modulates stomatal development by regulating the methylation-mediated silencing of ERECTA receptor genes (e.g. ER, ERL1 and ERL2) and preventing cell divisions. The protein is Protein ENHANCED DOWNY MILDEW 2 of Arabidopsis thaliana (Mouse-ear cress).